The following is a 286-amino-acid chain: Pantothenate synthetase (286 aa).

30–37 (MGFLHEGH) provides a ligand contact to ATP. Residue histidine 37 is the Proton donor of the active site. Glutamine 61 serves as a coordination point for (R)-pantoate. Residue glutamine 61 participates in beta-alanine binding. 147-150 (GLKD) is an ATP binding site. Glutamine 153 contacts (R)-pantoate. ATP contacts are provided by residues valine 176 and 184 to 187 (KSSR).

The protein belongs to the pantothenate synthetase family. As to quaternary structure, homodimer.

The protein localises to the cytoplasm. The enzyme catalyses (R)-pantoate + beta-alanine + ATP = (R)-pantothenate + AMP + diphosphate + H(+). Its pathway is cofactor biosynthesis; (R)-pantothenate biosynthesis; (R)-pantothenate from (R)-pantoate and beta-alanine: step 1/1. Its function is as follows. Catalyzes the condensation of pantoate with beta-alanine in an ATP-dependent reaction via a pantoyl-adenylate intermediate. This is Pantothenate synthetase from Bacillus velezensis (strain DSM 23117 / BGSC 10A6 / LMG 26770 / FZB42) (Bacillus amyloliquefaciens subsp. plantarum).